Consider the following 503-residue polypeptide: MMKELRFYNTLTRKKENFIPIDPTKVRLYVCGPTVYDYAHIGNARPLIVFDILFRLLRHVYGSDHVLYARNITDVDDKINARAACEYPNLPLNEAIRQLTERTYFQFQQDTIALGCLLPTSQPRATEHLEEMRALIERLLEKGHAYKAENHILFSISSIKNPPHYGAFANRSLDEMRAGARIDVAAYKREEMDFVLWKPSAEGEPGWKSPGGIPVLGRPGWHIECSAMSMAKLLAPYGGGLTCDDPIANIFDIHGGGLDLIFPHHENEIAQSCSAFGTERMANFWMHNGFLQVEGKKMSKSFGNFITIRSVLENNFLEFNGALAYEIKQNWAGLSARFSMLQTHYREPLNWTAQRLMQSSSELYRWYELLRDKKSMMENNEAIEDTLIDALSDDLNTPKAFTLLRKFYKAGDALALANGMNLLGLLRQEWIKEIDCPLFIKKTSLDSKFIEQCIAERLRLIHNKEWGAADKIRNELAAEGILLKDGKDPQSGKRITVWEIKRF.

A Zn(2+)-binding site is contributed by cysteine 31. The 'HIGH' region motif lies at 33 to 43 (PTVYDYAHIGN). Residues cysteine 225, histidine 264, and glutamate 268 each contribute to the Zn(2+) site. The short motif at 297 to 301 (KMSKS) is the 'KMSKS' region element. Lysine 300 provides a ligand contact to ATP.

It belongs to the class-I aminoacyl-tRNA synthetase family. As to quaternary structure, monomer. Zn(2+) serves as cofactor.

It is found in the cytoplasm. The catalysed reaction is tRNA(Cys) + L-cysteine + ATP = L-cysteinyl-tRNA(Cys) + AMP + diphosphate. The protein is Cysteine--tRNA ligase of Bartonella tribocorum (strain CIP 105476 / IBS 506).